The following is a 652-amino-acid chain: DNA ligase (652 aa).

Residues 29–33 (DAEYD), 78–79 (SL), and glutamate 107 contribute to the NAD(+) site. The active-site N6-AMP-lysine intermediate is the lysine 109. Positions 130, 164, 278, and 302 each coordinate NAD(+). Residues cysteine 395, cysteine 398, cysteine 413, and cysteine 418 each coordinate Zn(2+). A BRCT domain is found at 577–652 (DENAALSGMT…IKDEAWLESL (76 aa)).

Belongs to the NAD-dependent DNA ligase family. LigA subfamily. It depends on Mg(2+) as a cofactor. Requires Mn(2+) as cofactor.

It carries out the reaction NAD(+) + (deoxyribonucleotide)n-3'-hydroxyl + 5'-phospho-(deoxyribonucleotide)m = (deoxyribonucleotide)n+m + AMP + beta-nicotinamide D-nucleotide.. Functionally, DNA ligase that catalyzes the formation of phosphodiester linkages between 5'-phosphoryl and 3'-hydroxyl groups in double-stranded DNA using NAD as a coenzyme and as the energy source for the reaction. It is essential for DNA replication and repair of damaged DNA. This Streptococcus suis (strain 05ZYH33) protein is DNA ligase.